A 39-amino-acid chain; its full sequence is Photosystem II reaction center protein L (39 aa).

The helical transmembrane segment at 18-38 threads the bilayer; it reads SLYLGLLIVFTTGILFSSYFF.

The protein belongs to the PsbL family. As to quaternary structure, PSII is composed of 1 copy each of membrane proteins PsbA, PsbB, PsbC, PsbD, PsbE, PsbF, PsbH, PsbI, PsbJ, PsbK, PsbL, PsbM, PsbT, PsbX, PsbY, PsbZ, Psb30/Ycf12, peripheral proteins PsbO, CyanoQ (PsbQ), PsbU, PsbV and a large number of cofactors. It forms dimeric complexes.

It is found in the cellular thylakoid membrane. In terms of biological role, one of the components of the core complex of photosystem II (PSII). PSII is a light-driven water:plastoquinone oxidoreductase that uses light energy to abstract electrons from H(2)O, generating O(2) and a proton gradient subsequently used for ATP formation. It consists of a core antenna complex that captures photons, and an electron transfer chain that converts photonic excitation into a charge separation. This subunit is found at the monomer-monomer interface and is required for correct PSII assembly and/or dimerization. The sequence is that of Photosystem II reaction center protein L from Synechococcus sp. (strain CC9311).